A 339-amino-acid polypeptide reads, in one-letter code: Glucokinase (339 aa).

16-21 provides a ligand contact to ATP; that stretch reads GDIGGT.

This sequence belongs to the bacterial glucokinase family.

Its subcellular location is the cytoplasm. The enzyme catalyses D-glucose + ATP = D-glucose 6-phosphate + ADP + H(+). This chain is Glucokinase, found in Pseudomonas paraeruginosa (strain DSM 24068 / PA7) (Pseudomonas aeruginosa (strain PA7)).